Consider the following 325-residue polypeptide: Aspartate carbamoyltransferase catalytic subunit (325 aa).

The carbamoyl phosphate site is built by Arg-55 and Thr-56. Lys-83 provides a ligand contact to L-aspartate. Carbamoyl phosphate contacts are provided by Arg-105, His-135, and Gln-138. Positions 176 and 230 each coordinate L-aspartate. Residues Gly-271 and Pro-272 each contribute to the carbamoyl phosphate site.

It belongs to the aspartate/ornithine carbamoyltransferase superfamily. ATCase family. As to quaternary structure, heterododecamer (2C3:3R2) of six catalytic PyrB chains organized as two trimers (C3), and six regulatory PyrI chains organized as three dimers (R2).

It catalyses the reaction carbamoyl phosphate + L-aspartate = N-carbamoyl-L-aspartate + phosphate + H(+). It participates in pyrimidine metabolism; UMP biosynthesis via de novo pathway; (S)-dihydroorotate from bicarbonate: step 2/3. In terms of biological role, catalyzes the condensation of carbamoyl phosphate and aspartate to form carbamoyl aspartate and inorganic phosphate, the committed step in the de novo pyrimidine nucleotide biosynthesis pathway. The chain is Aspartate carbamoyltransferase catalytic subunit from Streptomyces avermitilis (strain ATCC 31267 / DSM 46492 / JCM 5070 / NBRC 14893 / NCIMB 12804 / NRRL 8165 / MA-4680).